The chain runs to 150 residues: Endoribonuclease YbeY (150 aa).

Zn(2+) is bound by residues His113, His117, and His123.

This sequence belongs to the endoribonuclease YbeY family. It depends on Zn(2+) as a cofactor.

It is found in the cytoplasm. In terms of biological role, single strand-specific metallo-endoribonuclease involved in late-stage 70S ribosome quality control and in maturation of the 3' terminus of the 16S rRNA. The sequence is that of Endoribonuclease YbeY from Syntrophotalea carbinolica (strain DSM 2380 / NBRC 103641 / GraBd1) (Pelobacter carbinolicus).